Consider the following 1174-residue polypeptide: Probable DNA-directed RNA polymerase I subunit RPA2 (1174 aa).

Basic and acidic residues predominate over residues 1-16 (MSFQTLERERTFKNPP). Positions 1 to 23 (MSFQTLERERTFKNPPKDGTSFP) are disordered. The C4-type zinc-finger motif lies at 1089-1118 (CRDCGSIISIMSTISMNGVGSASEVRCRSC).

It belongs to the RNA polymerase beta chain family. In terms of assembly, component of the RNA polymerase I (Pol I) complex consisting of 14 subunits.

It localises to the nucleus. The protein localises to the nucleolus. The catalysed reaction is RNA(n) + a ribonucleoside 5'-triphosphate = RNA(n+1) + diphosphate. In terms of biological role, DNA-dependent RNA polymerase catalyzes the transcription of DNA into RNA using the four ribonucleoside triphosphates as substrates. Second largest core component of RNA polymerase I which synthesizes ribosomal RNA precursors. Proposed to contribute to the polymerase catalytic activity and forms the polymerase active center together with the largest subunit. Pol I is composed of mobile elements and RPA2 is part of the core element with the central large cleft and probably a clamp element that moves to open and close the cleft. This chain is Probable DNA-directed RNA polymerase I subunit RPA2 (rpa2), found in Schizosaccharomyces pombe (strain 972 / ATCC 24843) (Fission yeast).